We begin with the raw amino-acid sequence, 1770 residues long: Probable outer membrane protein PmpC (1770 aa).

The signal sequence occupies residues 1 to 20 (MKFMSATAVFAAALSSVTEA). Disordered stretches follow at residues 73 to 109 (LPRKHLSSSSEASPTTEGVSSSSSGETDEKTEEELDN), 264 to 311 (EDTL…GKGG), 481 to 505 (PAAPSLTEAESDQTDQTETSDTNSD), 611 to 818 (ESTP…STTE), and 1271 to 1329 (LRII…TSRT). Low complexity predominate over residues 85-97 (SPTTEGVSSSSSG). Polar residues predominate over residues 268-285 (DSTPETEQTESNGNQDGS). Composition is skewed to low complexity over residues 294–303 (SESPESTPSP) and 496–505 (QTETSDTNSD). 2 stretches are compositionally biased toward polar residues: residues 631 to 675 (TEDP…TGNA) and 682 to 703 (QDSTQSNEENTLPNSNIDQSNE). 2 stretches are compositionally biased toward low complexity: residues 719-748 (ESVSSSSESGSSTPQDGGAASSGAPSGDQS) and 762-802 (STDS…GDSA). The segment covering 1303–1319 (NNDASNQGESANGSSSP) has biased composition (polar residues). The Autotransporter domain maps to 1477 to 1770 (EEVSYNNLWI…MMNCGARMTF (294 aa)).

Belongs to the PMP outer membrane protein family.

Its subcellular location is the secreted. It localises to the cell wall. The protein localises to the cell outer membrane. In Chlamydia trachomatis serovar D (strain ATCC VR-885 / DSM 19411 / UW-3/Cx), this protein is Probable outer membrane protein PmpC (pmpC).